The following is a 159-amino-acid chain: Ubiquitin-like protein ATG12 (159 aa).

A disordered region spans residues 1-40; that stretch reads MASPQPPFGGGSNSNSNTASPSNNLSPTASPLLEGRDSPN. The segment covering 13-27 has biased composition (low complexity); the sequence is NSNSNTASPSNNLSP. Gly159 is covalently cross-linked (Glycyl lysine isopeptide (Gly-Lys) (interchain with K-218 in ATG5)).

Belongs to the ATG12 family. As to quaternary structure, forms a conjugate with ATG5. Forms a thioester bond with the 'Cys-116' of ATG10. Interacts with the ATG7 C-terminal 40 amino acids domain. The ATG12-ATG5 conjugate forms a complex with several units of ATG16. The ATG12-ATG5 conjugate also associates with ATG3.

The protein localises to the preautophagosomal structure membrane. It localises to the cytoplasm. Its function is as follows. Ubiquitin-like protein involved in cytoplasm to vacuole transport (Cvt), autophagy vesicles formation, mitophagy, and nucleophagy. Conjugation with ATG5 through a ubiquitin-like conjugating system involving also ATG7 as an E1-like activating enzyme and ATG10 as an E2-like conjugating enzyme, is essential for its function. The ATG12-ATG5 conjugate acts as an E3-like enzyme which is required for lipidation of ATG8 and ATG8 association to the vesicle membranes. ATG12-ATG5 rearranges the ATG3 catalytic center and enhances its E2 activity. Plays a role in sexual development and perithecia formation. This Sordaria macrospora (strain ATCC MYA-333 / DSM 997 / K(L3346) / K-hell) protein is Ubiquitin-like protein ATG12.